A 396-amino-acid polypeptide reads, in one-letter code: MIKLKSYFGEFGGMYVPQILIPALTQLEEAFISAQDDAIFQKELKYLLNNYAGRPTPLTLCRNLTKGTRAKLYLKREDLLHGGSHKTNQVLGQALLAKRMSKTEIIAETGAGQHGVAVSIAASLLGLKCRIYMGSKDIKRQKLNVLRMQLMGTQVIPVHRGSETLKDACNEAMREWSKTYEYTHYMLGTAAGPHPFPTIVREFQRIIGKETYKQIQKYEQCLPDAIIACVGGGSNAIGIFSDFVDIPSVQLLGVEAGGLGINTEYHGAALQHGSIGIYFGMKTSILQSSEGQVKNSYSVSAGLDFPSVGPEHVYLKNTGRVQYVSINDIEAITAFKKLSIHEGIIPALESAHALAHALKIIQKQPDKAQILVVNLSGRGDKDISTVHNALQKERDK.

Lys86 is subject to N6-(pyridoxal phosphate)lysine.

Belongs to the TrpB family. As to quaternary structure, tetramer of two alpha and two beta chains. Pyridoxal 5'-phosphate serves as cofactor.

The catalysed reaction is (1S,2R)-1-C-(indol-3-yl)glycerol 3-phosphate + L-serine = D-glyceraldehyde 3-phosphate + L-tryptophan + H2O. It participates in amino-acid biosynthesis; L-tryptophan biosynthesis; L-tryptophan from chorismate: step 5/5. The beta subunit is responsible for the synthesis of L-tryptophan from indole and L-serine. In Blochmanniella pennsylvanica (strain BPEN), this protein is Tryptophan synthase beta chain.